The primary structure comprises 110 residues: Protein YcgL (110 aa).

The region spanning 14–98 (MFCVIYRSSK…PPEDLLKQHL (85 aa)) is the YcgL domain. The disordered stretch occupies residues 87-110 (PPPPEDLLKQHLSSVGQNTSSADR). Positions 97 to 110 (HLSSVGQNTSSADR) are enriched in polar residues.

The sequence is that of Protein YcgL from Salmonella newport (strain SL254).